The primary structure comprises 751 residues: Disintegrin and metalloproteinase domain-containing protein 2 (751 aa).

The first 16 residues, 1-16 (MLRVLFLLCGLSGLRT), serve as a signal peptide directing secretion. The propeptide occupies 17-173 (KENSERLHVQ…PYKVQSVQPR (157 aa)). Topologically, residues 17 to 702 (KENSERLHVQ…DVYQTAKPTR (686 aa)) are extracellular. N-linked (GlcNAc...) asparagine glycosylation is found at asparagine 122, asparagine 147, asparagine 219, and asparagine 289. Residues 177-374 (QYIEMHVVVE…QKSQCLQNLP (198 aa)) enclose the Peptidase M12B domain. 3 cysteine pairs are disulfide-bonded: cysteine 286/cysteine 369, cysteine 328/cysteine 353, and cysteine 330/cysteine 335. Asparagine 352, asparagine 434, asparagine 458, asparagine 559, and asparagine 566 each carry an N-linked (GlcNAc...) asparagine glycan. One can recognise a Disintegrin domain in the interval 383–472 (DAVCGNSIVE…LCPDDIVIQN (90 aa)). Cysteine 444 and cysteine 464 are disulfide-bonded. Residues 612–645 (VNLGCTLQNCNNQGICNSLQHCHCNPTFLPPNCS) form the EGF-like domain. 3 disulfides stabilise this stretch: cysteine 616–cysteine 627, cysteine 621–cysteine 633, and cysteine 635–cysteine 644. The N-linked (GlcNAc...) asparagine glycan is linked to asparagine 643. The helical transmembrane segment at 703 to 723 (WPFFLLIPFFIILGALIAILV) threads the bilayer. Topologically, residues 724–751 (KVQFQRKKWKTEDYTSDEQFESDSELKE) are cytoplasmic. Serine 745 carries the phosphoserine modification.

In terms of assembly, heterodimer with ADAM1/fertilin subunit alpha. Post-translationally, the signal and the metalloprotease domain are cleaved during the epididymal maturation of the spermatozoa. As to expression, expressed specifically in testis.

It localises to the membrane. Sperm surface membrane protein that may be involved in sperm-egg plasma membrane adhesion and fusion during fertilization. Could have a direct role in sperm-zona binding or migration of sperm from the uterus into the oviduct. Interactions with egg membrane could be mediated via binding between its disintegrin-like domain to one or more integrins receptors on the egg. This is a non catalytic metalloprotease-like protein. This Oryctolagus cuniculus (Rabbit) protein is Disintegrin and metalloproteinase domain-containing protein 2 (ADAM2).